The chain runs to 138 residues: MDKLSEFCSKFVENVMKMTVNQLNKVTKELAKKITIDSNFKSVTDNNSVIESSKEITENKVIEKLEFNIILESFISSQRIKLIKTLRDLISIGLKEAKDLIETLPKTIYEGVSKEFAEETKKTLEESGASVIITENII.

Belongs to the bacterial ribosomal protein bL12 family. Homodimer. Part of the ribosomal stalk of the 50S ribosomal subunit. Forms a multimeric L10(L12)X complex, where L10 forms an elongated spine to which 2 to 4 L12 dimers bind in a sequential fashion. Binds GTP-bound translation factors.

It is found in the plastid. Its function is as follows. Forms part of the ribosomal stalk which helps the ribosome interact with GTP-bound translation factors. Is thus essential for accurate translation. In Euglena longa (Euglenophycean alga), this protein is Large ribosomal subunit protein bL12c.